Here is a 163-residue protein sequence, read N- to C-terminus: Cyclic pyranopterin monophosphate synthase (163 aa).

Substrate-binding positions include 75 to 77 (LCH) and 115 to 116 (ME). Residue Asp-130 is part of the active site.

The protein belongs to the MoaC family. As to quaternary structure, homohexamer; trimer of dimers.

It carries out the reaction (8S)-3',8-cyclo-7,8-dihydroguanosine 5'-triphosphate = cyclic pyranopterin phosphate + diphosphate. Its pathway is cofactor biosynthesis; molybdopterin biosynthesis. Its function is as follows. Catalyzes the conversion of (8S)-3',8-cyclo-7,8-dihydroguanosine 5'-triphosphate to cyclic pyranopterin monophosphate (cPMP). The protein is Cyclic pyranopterin monophosphate synthase of Variovorax paradoxus (strain S110).